A 530-amino-acid chain; its full sequence is DNA damage-binding protein cmr1 (530 aa).

Disordered stretches follow at residues 34–115 (VGLF…RKSD) and 224–250 (TKPV…LTTL). Residues 52–62 (AKKKKPAPKKV) are compositionally biased toward basic residues. Over residues 89 to 108 (EVAKRKADEHDAALQEAERA) the composition is skewed to basic and acidic residues. A WD 1 repeat occupies 188-229 (LTPERIYAMTFHPSESKPLIFAGDKMGHLGVLDASQTKPVSA). Residues 233–244 (DEDEEDDDDDPD) show a composition bias toward acidic residues. WD repeat units follow at residues 252–292 (PHTR…SVER), 302–339 (VPIS…QDSA), 344–384 (LSDK…HKSP), 389–430 (EHES…ASWK), 453–496 (GRWV…LAQL), and 499–530 (DGIT…CLWM).

It belongs to the WD repeat DDB2/WDR76 family.

In terms of biological role, DNA-binding protein that binds to both single- and double-stranded DNA. Binds preferentially to UV-damaged DNA. May be involved in DNA-metabolic processes. This Aspergillus terreus (strain NIH 2624 / FGSC A1156) protein is DNA damage-binding protein cmr1.